The primary structure comprises 270 residues: Elongation factor Ts (270 aa).

The segment at threonine 77–valine 80 is involved in Mg(2+) ion dislocation from EF-Tu.

It belongs to the EF-Ts family.

It is found in the cytoplasm. Functionally, associates with the EF-Tu.GDP complex and induces the exchange of GDP to GTP. It remains bound to the aminoacyl-tRNA.EF-Tu.GTP complex up to the GTP hydrolysis stage on the ribosome. The sequence is that of Elongation factor Ts from Nocardioides sp. (strain ATCC BAA-499 / JS614).